Reading from the N-terminus, the 428-residue chain is Dual-specificity RNA methyltransferase RlmN (428 aa).

The span at 1–17 (MPLHRVEALGEPQDRTG) shows a compositional bias: basic and acidic residues. Residues 1-44 (MPLHRVEALGEPQDRTGKTFSGRTNGPISSPLTDTERRMSIPQN) are disordered. Over residues 18–33 (KTFSGRTNGPISSPLT) the composition is skewed to polar residues. Glutamate 136 functions as the Proton acceptor in the catalytic mechanism. Residues 142 to 381 (EDDRGALCVS…APIRMPRGRD (240 aa)) form the Radical SAM core domain. A disulfide bridge connects residues cysteine 149 and cysteine 386. Residues cysteine 156, cysteine 160, and cysteine 163 each contribute to the [4Fe-4S] cluster site. Residues 212–213 (GE), serine 244, 266–268 (SLH), and asparagine 343 contribute to the S-adenosyl-L-methionine site. The active-site S-methylcysteine intermediate is the cysteine 386.

Belongs to the radical SAM superfamily. RlmN family. Requires [4Fe-4S] cluster as cofactor.

The protein resides in the cytoplasm. The catalysed reaction is adenosine(2503) in 23S rRNA + 2 reduced [2Fe-2S]-[ferredoxin] + 2 S-adenosyl-L-methionine = 2-methyladenosine(2503) in 23S rRNA + 5'-deoxyadenosine + L-methionine + 2 oxidized [2Fe-2S]-[ferredoxin] + S-adenosyl-L-homocysteine. It catalyses the reaction adenosine(37) in tRNA + 2 reduced [2Fe-2S]-[ferredoxin] + 2 S-adenosyl-L-methionine = 2-methyladenosine(37) in tRNA + 5'-deoxyadenosine + L-methionine + 2 oxidized [2Fe-2S]-[ferredoxin] + S-adenosyl-L-homocysteine. In terms of biological role, specifically methylates position 2 of adenine 2503 in 23S rRNA and position 2 of adenine 37 in tRNAs. m2A2503 modification seems to play a crucial role in the proofreading step occurring at the peptidyl transferase center and thus would serve to optimize ribosomal fidelity. The sequence is that of Dual-specificity RNA methyltransferase RlmN from Rhodospirillum rubrum (strain ATCC 11170 / ATH 1.1.1 / DSM 467 / LMG 4362 / NCIMB 8255 / S1).